The chain runs to 371 residues: Probable cysteine protease RDL5 (371 aa).

A signal peptide spans 1-23 (MGYAKSAMLIFLLALVIASCATA). Residues 24–143 (MDMSVVSSND…NRYKTSDGDV (120 aa)) constitute a propeptide, activation peptide. Asparagine 94 carries N-linked (GlcNAc...) asparagine glycosylation. Cystine bridges form between cysteine 165–cysteine 206, cysteine 199–cysteine 239, and cysteine 298–cysteine 349. The active site involves cysteine 168. Residues histidine 304 and asparagine 324 contribute to the active site.

This sequence belongs to the peptidase C1 family. Expressed in roots, inflorescences and siliques.

Functionally, possesses protease activity in vitro. The sequence is that of Probable cysteine protease RDL5 from Arabidopsis thaliana (Mouse-ear cress).